The primary structure comprises 243 residues: Ubiquinone/menaquinone biosynthesis C-methyltransferase UbiE (243 aa).

S-adenosyl-L-methionine is bound by residues T69, D90, and 116–117 (DA).

Belongs to the class I-like SAM-binding methyltransferase superfamily. MenG/UbiE family.

It catalyses the reaction a 2-demethylmenaquinol + S-adenosyl-L-methionine = a menaquinol + S-adenosyl-L-homocysteine + H(+). The catalysed reaction is a 2-methoxy-6-(all-trans-polyprenyl)benzene-1,4-diol + S-adenosyl-L-methionine = a 5-methoxy-2-methyl-3-(all-trans-polyprenyl)benzene-1,4-diol + S-adenosyl-L-homocysteine + H(+). Its pathway is quinol/quinone metabolism; menaquinone biosynthesis; menaquinol from 1,4-dihydroxy-2-naphthoate: step 2/2. The protein operates within cofactor biosynthesis; ubiquinone biosynthesis. Functionally, methyltransferase required for the conversion of demethylmenaquinol (DMKH2) to menaquinol (MKH2) and the conversion of 2-polyprenyl-6-methoxy-1,4-benzoquinol (DDMQH2) to 2-polyprenyl-3-methyl-6-methoxy-1,4-benzoquinol (DMQH2). The chain is Ubiquinone/menaquinone biosynthesis C-methyltransferase UbiE from Paraburkholderia phymatum (strain DSM 17167 / CIP 108236 / LMG 21445 / STM815) (Burkholderia phymatum).